The chain runs to 593 residues: Mitoguardin 2 (593 aa).

2 consecutive transmembrane segments (helical) span residues 11-31 and 42-62; these read MIQA…TTFG and PGLR…ALAA. Disordered stretches follow at residues 103–141 and 196–231; these read GYSS…VASM and SVGQ…SQRK. Composition is skewed to low complexity over residues 106–116 and 123–141; these read SRRVQSPSSKS and ISSI…VASM. Position 132 is a phosphoserine (S132). T206 carries the phosphothreonine modification. S220, S224, and S228 each carry phosphoserine. T273 is modified (phosphothreonine). A phosphoserine mark is found at S276 and S295. The short motif at 292–298 is the FFAT element; it reads SFFSATE.

This sequence belongs to the mitoguardin family. Homodimer and heterodimer; forms heterodimers with MIGA1. Interacts with PLD6/MitoPLD. Interacts (via phosphorylated FFAT motif) with MOSPD2, VAPA and VAPB. Post-translationally, phosphorylation at Ser-295 of the FFAT motif activates interaction with MOSPD2, VAPA and VAPB.

The protein resides in the mitochondrion outer membrane. Its function is as follows. Regulator of mitochondrial fusion: acts by forming homo- and heterodimers at the mitochondrial outer membrane and facilitating the formation of PLD6/MitoPLD dimers. May act by regulating phospholipid metabolism via PLD6/MitoPLD. The polypeptide is Mitoguardin 2 (Homo sapiens (Human)).